The primary structure comprises 713 residues: Nucleolin (713 aa).

The tract at residues 1-309 (MVKLAKAGKT…QKIEGSEPTT (309 aa)) is disordered. 3 positions are modified to N6-acetyllysine: Lys9, Lys15, and Lys16. Acidic residues predominate over residues 24-46 (VEEDSEDEEMSEDEDDSSGEEEV). Phosphoserine is present on residues Ser28, Ser34, Ser40, and Ser41. Positions 56–111 (ATTTPAKKVVVSQTKKAAVPTPAKKAAVTPGKKAAATPAKKAVTPAKVVPTPGKKG) are enriched in low complexity. The stretch at 58 to 65 (TTPAKKVV) is repeat 1. The 8 X 8 AA tandem repeats of X-T-P-X-K-K-X-X stretch occupies residues 58-135 (TTPAKKVVVS…GAVTPAKGAK (78 aa)). At Ser67 the chain carries Phosphoserine. Residues Thr69, Thr76, Thr84, and Thr92 each carry the phosphothreonine modification. 3 consecutive repeat copies span residues 75-82 (PTPAKKAA), 83-90 (VTPGKKAA), and 91-98 (ATPAKKAV). At Lys96 the chain carries N6-acetyllysine. Thr99 carries the phosphothreonine modification. The 5; truncated repeat unit spans residues 99-104 (TPAKVV). The residue at position 102 (Lys102) is an N6-acetyllysine. Repeat unit 6 spans residues 105–112 (PTPGKKGA). Phosphothreonine is present on Thr106. 2 positions are modified to N6-acetyllysine: Lys109 and Lys116. 2 tandem repeats follow at residues 120–127 (PTPGKKGA) and 128–135 (VTPAKGAK). Thr121 carries the phosphothreonine modification. An N6-acetyllysine modification is found at Lys124. Residues Ser145 and Ser157 each carry the phosphoserine modification. Acidic residues predominate over residues 145 to 168 (SDEDEDEEDEDDSDEDEDEEDEFE). Residues 169–186 (PPVVKGVKPAKAAPAAPA) show a composition bias toward low complexity. 2 positions are modified to phosphoserine: Ser187 and Ser213. Residues 187–218 (SEDEDEEDDDDEDDDDDDEEEEEEDDSEEEVM) show a composition bias toward acidic residues. Residue Thr221 is modified to Phosphothreonine. Acidic residues predominate over residues 242–275 (EEEEDDEDDEDEEEDEDEEDEEDDEDEDEEEEEE). A compositionally biased stretch (basic and acidic residues) spans 288-304 (MTKQKEAPEAKKQKIEG). Lys301 participates in a covalent cross-link: Glycyl lysine isopeptide (Lys-Gly) (interchain with G-Cter in SUMO1); alternate. A Glycyl lysine isopeptide (Lys-Gly) (interchain with G-Cter in SUMO2); alternate cross-link involves residue Lys301. The residue at position 305 (Ser305) is a Phosphoserine. 2 consecutive RRM domains span residues 311 to 387 (FNLF…KPKG) and 397 to 470 (RTLL…YTGE). Lys322 bears the N6-acetyllysine mark. A Glycyl lysine isopeptide (Lys-Gly) (interchain with G-Cter in SUMO1); alternate cross-link involves residue Lys328. Residue Lys328 forms a Glycyl lysine isopeptide (Lys-Gly) (interchain with G-Cter in SUMO2); alternate linkage. Lys352 is subject to N6-acetyllysine. The residue at position 360 (Ser360) is a Phosphoserine. Thr371 bears the Phosphothreonine mark. Lys374 is covalently cross-linked (Glycyl lysine isopeptide (Lys-Gly) (interchain with G-Cter in SUMO2)). Lys381 is covalently cross-linked (Glycyl lysine isopeptide (Lys-Gly) (interchain with G-Cter in SUMO2); alternate). Position 381 is an N6-acetyllysine; alternate (Lys381). Lys402 bears the N6-acetyllysine mark. Ser405 is modified (phosphoserine). A Phosphothreonine modification is found at Thr409. An N6-acetyllysine modification is found at Lys448. 2 positions are modified to phosphoserine: Ser462 and Ser464. N6-acetyllysine occurs at positions 471 and 480. Positions 489–563 (KTLVLSNLSY…RTIRLELQGP (75 aa)) constitute an RRM 3 domain. Residue Lys516 forms a Glycyl lysine isopeptide (Lys-Gly) (interchain with G-Cter in SUMO2); alternate linkage. Lys516 is subject to N6-acetyllysine; alternate. Lys524 carries the post-translational modification N6-acetyllysine. Ser566 carries the phosphoserine modification. At Lys575 the chain carries N6-acetyllysine. The RRM 4 domain occupies 575-650 (KTLFVKGLSE…NKVTLDWAKP (76 aa)). A Glycyl lysine isopeptide (Lys-Gly) (interchain with G-Cter in SUMO2); alternate cross-link involves residue Lys580. Lys580 bears the N6-acetyllysine; alternate mark. Phosphoserine is present on Ser583. Residue Lys592 forms a Glycyl lysine isopeptide (Lys-Gly) (interchain with G-Cter in SUMO1); alternate linkage. A Glycyl lysine isopeptide (Lys-Gly) (interchain with G-Cter in SUMO2); alternate cross-link involves residue Lys592. Phosphoserine is present on residues Ser594 and Ser622. Lys627 is covalently cross-linked (Glycyl lysine isopeptide (Lys-Gly) (interchain with G-Cter in SUMO2)). Positions 645–713 (LDWAKPKGEG…KPQGKKTKFE (69 aa)) are disordered. Lys649 carries the N6-acetyllysine modification. The segment covering 653–702 (EGGFGGRGGGRGGFGGRGGGRGGRGGFGGRGRGGFGGRGGFRGGRGGGGD) has biased composition (gly residues). Arg659, Arg663, Arg669, Arg673, Arg676, Arg682, Arg684, Arg690, and Arg694 each carry asymmetric dimethylarginine. Arg697 is subject to Asymmetric dimethylarginine; alternate. Arg697 bears the Omega-N-methylarginine; alternate mark.

Identified in a IGF2BP1-dependent mRNP granule complex containing untranslated mRNAs. Component of the SWAP complex that consists of NPM1, NCL/nucleolin, PARP1 and SWAP70. Component of a complex which is at least composed of HTATSF1/Tat-SF1, the P-TEFb complex components CDK9 and CCNT1, RNA polymerase II, SUPT5H, and NCL/nucleolin. Interacts with AICDA. Interacts with APTX. Interacts with C1QBP. Interacts with ERBB4. Interacts (via C-terminus) with FMR1 isoform 6 (via N-terminus). Interacts with GZF1; this interaction is important for nucleolar localization of GZF1. Interacts with NSUN2. Interacts with NVL. Interacts (via N-terminus domain) with SETX. Interacts (via RRM1 and C-terminal RRM4/Arg/Gly-rich domains) with TERT; the interaction is important for nucleolar localization of TERT. Interacts with WDR46. Interacts with ZFP36. Interacts with LRRC34. Interacts with RRP1B. Interacts with HNRNPU; this interaction occurs during mitosis. Interacts with RIOK1; RIOK1 recruits NCL to PRMT5 for symmetrically methylation. Interacts with ZBTB7B. Interacts with MDK; this interaction promotes NCL clustering and lateral movements of this complex into lipid rafts leading to MDK internalization. Interacts with HDGF. Interacts with ALKBH2. Interacts with IGFBP5; this interaction is necessary for IGFBP5 localization to the nucleus. Interacts with DDX24 (when ubiquitinated); this interaction may be important during ribosome biogenesis. Some glutamate residues are glycylated by TTLL8. This modification occurs exclusively on glutamate residues and results in a glycine chain on the gamma-carboxyl group. Post-translationally, symmetrically methylated by PRMT5.

It localises to the nucleus. Its subcellular location is the nucleolus. It is found in the cytoplasm. Nucleolin is the major nucleolar protein of growing eukaryotic cells. It is found associated with intranucleolar chromatin and pre-ribosomal particles. It induces chromatin decondensation by binding to histone H1. It is thought to play a role in pre-rRNA transcription and ribosome assembly. May play a role in the process of transcriptional elongation. Binds RNA oligonucleotides with 5'-UUAGGG-3' repeats more tightly than the telomeric single-stranded DNA 5'-TTAGGG-3' repeats. This is Nucleolin (Ncl) from Rattus norvegicus (Rat).